The chain runs to 518 residues: Golgi-associated olfactory signaling regulator (518 aa).

The N-terminal stretch at 1–19 (MKSFSRILFLVFLLAGLRS) is a signal peptide. The Extracellular portion of the chain corresponds to 20–409 (KAAPSAPLPL…GRPRGAAGGA (390 aa)). The interval 38-377 (HPSETSPLKG…ATLRAPQRHS (340 aa)) is disordered. Basic and acidic residues predominate over residues 92 to 106 (DLRETPHPESPETPK). Residue Asn124 is glycosylated (N-linked (GlcNAc...) asparagine). The span at 138 to 153 (TPGPTEMPHPGSPETP) shows a compositional bias: pro residues. An N-linked (GlcNAc...) asparagine glycan is attached at Asn156. Polar residues-rich tracts occupy residues 168 to 180 (TPNT…TPQE) and 187 to 207 (LNAT…NPTK). Residues Asn188 and Asn220 are each glycosylated (N-linked (GlcNAc...) asparagine). 2 stretches are compositionally biased toward basic and acidic residues: residues 209 to 220 (PDPKSPEKHDLN) and 236 to 247 (DPSKTPHPESHV). Polar residues-rich tracts occupy residues 248 to 270 (THNP…QNAT) and 276 to 285 (SDPQISTSLY). An N-linked (GlcNAc...) asparagine glycan is attached at Asn268. The chain crosses the membrane as a helical span at residues 410–430 (LCLFFAGTALLIGIFVLLWCL). The Cytoplasmic portion of the chain corresponds to 431 to 518 (YRRAARQRPF…SPATLPNNFV (88 aa)). The interval 477 to 518 (HIATKQPPPTPPLPPKLPPPPRGGRPQRLEALSPATLPNNFV) is disordered. Pro residues predominate over residues 482–499 (QPPPTPPLPPKLPPPPRG).

Its subcellular location is the golgi apparatus membrane. In terms of biological role, required for proper function of the olfactory system. May be involved in establishing the acuity of olfactory sensory signaling. The polypeptide is Golgi-associated olfactory signaling regulator (GFY) (Homo sapiens (Human)).